The sequence spans 336 residues: Fructose-1,6-bisphosphatase class 1 (336 aa).

Mg(2+)-binding residues include E91, D114, L116, and D117. Substrate is bound by residues 117–120 (DGSS), N210, Y243, and K273. E279 contacts Mg(2+).

This sequence belongs to the FBPase class 1 family. In terms of assembly, homotetramer. It depends on Mg(2+) as a cofactor.

Its subcellular location is the cytoplasm. The catalysed reaction is beta-D-fructose 1,6-bisphosphate + H2O = beta-D-fructose 6-phosphate + phosphate. It participates in carbohydrate biosynthesis; gluconeogenesis. The sequence is that of Fructose-1,6-bisphosphatase class 1 from Dichelobacter nodosus (strain VCS1703A).